We begin with the raw amino-acid sequence, 489 residues long: Lysine--tRNA ligase (489 aa).

The Mg(2+) site is built by Glu-399 and Glu-406.

It belongs to the class-II aminoacyl-tRNA synthetase family. Homodimer. It depends on Mg(2+) as a cofactor.

The protein localises to the cytoplasm. It catalyses the reaction tRNA(Lys) + L-lysine + ATP = L-lysyl-tRNA(Lys) + AMP + diphosphate. The polypeptide is Lysine--tRNA ligase (Synechococcus sp. (strain CC9311)).